The primary structure comprises 269 residues: MHITEIAKVVEQVRKTNPLVHNITNVVVTNFTANGLLALGASPVMAYAKEEVAEMASIAGALVLNMGTLRPDEVEAMLIAGKAANQQHVPVLFDPVGAGATLYRTEVARHIPNEIKLAMIRGNAAEIANVIHEKWEIKGVDAGTGNGDSVAIATKAANKLGTVAVITGKEDIVTDGKRTVIIRNGHPILTKVTGTGCLLTSVMGAFVAVEQDYVKAAVAALTFYGVAAEIAASKTVDQGPGSFQVEFLNQLANVTVSDIEQYGKAEEVR.

Met-45 is a binding site for substrate. Residues Arg-121 and Thr-167 each coordinate ATP. Gly-194 lines the substrate pocket.

This sequence belongs to the Thz kinase family. Mg(2+) serves as cofactor.

The enzyme catalyses 5-(2-hydroxyethyl)-4-methylthiazole + ATP = 4-methyl-5-(2-phosphooxyethyl)-thiazole + ADP + H(+). Its pathway is cofactor biosynthesis; thiamine diphosphate biosynthesis; 4-methyl-5-(2-phosphoethyl)-thiazole from 5-(2-hydroxyethyl)-4-methylthiazole: step 1/1. Functionally, catalyzes the phosphorylation of the hydroxyl group of 4-methyl-5-beta-hydroxyethylthiazole (THZ). The sequence is that of Hydroxyethylthiazole kinase from Bacillus cytotoxicus (strain DSM 22905 / CIP 110041 / 391-98 / NVH 391-98).